A 347-amino-acid polypeptide reads, in one-letter code: Quinolinate synthase (347 aa).

The iminosuccinate site is built by histidine 47 and serine 68. Cysteine 113 contributes to the [4Fe-4S] cluster binding site. Residues 139-141 (YAN) and serine 156 each bind iminosuccinate. Cysteine 200 serves as a coordination point for [4Fe-4S] cluster. Residues 226–228 (HPE) and threonine 243 contribute to the iminosuccinate site. Cysteine 297 contributes to the [4Fe-4S] cluster binding site.

The protein belongs to the quinolinate synthase family. Type 1 subfamily. [4Fe-4S] cluster serves as cofactor.

It is found in the cytoplasm. It catalyses the reaction iminosuccinate + dihydroxyacetone phosphate = quinolinate + phosphate + 2 H2O + H(+). It functions in the pathway cofactor biosynthesis; NAD(+) biosynthesis; quinolinate from iminoaspartate: step 1/1. Catalyzes the condensation of iminoaspartate with dihydroxyacetone phosphate to form quinolinate. The protein is Quinolinate synthase of Salmonella gallinarum (strain 287/91 / NCTC 13346).